The following is a 205-amino-acid chain: Guanylate kinase (205 aa).

Residues 6-185 enclose the Guanylate kinase-like domain; the sequence is GLLIVLSRPS…ACDRIKAIVV (180 aa). 13 to 20 provides a ligand contact to ATP; the sequence is RPSGVGKG.

Belongs to the guanylate kinase family.

The protein resides in the cytoplasm. The catalysed reaction is GMP + ATP = GDP + ADP. In terms of biological role, essential for recycling GMP and indirectly, cGMP. The protein is Guanylate kinase of Bacillus cereus (strain ATCC 14579 / DSM 31 / CCUG 7414 / JCM 2152 / NBRC 15305 / NCIMB 9373 / NCTC 2599 / NRRL B-3711).